Here is a 601-residue protein sequence, read N- to C-terminus: uncharacterized protein (601 aa).

Transmembrane regions (helical) follow at residues 74–94 (IFFF…VFSI), 104–124 (VSFL…PNDG), and 531–551 (LVLL…NYYY).

The protein resides in the endoplasmic reticulum membrane. This is an uncharacterized protein from Schizosaccharomyces pombe (strain 972 / ATCC 24843) (Fission yeast).